Here is a 153-residue protein sequence, read N- to C-terminus: Holo-[acyl-carrier-protein] synthase (153 aa).

Mg(2+) contacts are provided by aspartate 24 and glutamate 78.

The protein belongs to the P-Pant transferase superfamily. AcpS family. It depends on Mg(2+) as a cofactor.

The protein localises to the cytoplasm. The catalysed reaction is apo-[ACP] + CoA = holo-[ACP] + adenosine 3',5'-bisphosphate + H(+). Its function is as follows. Transfers the 4'-phosphopantetheine moiety from coenzyme A to a Ser of acyl-carrier-protein. This is Holo-[acyl-carrier-protein] synthase from Bordetella pertussis (strain Tohama I / ATCC BAA-589 / NCTC 13251).